The following is a 348-amino-acid chain: Putative olfactory receptor 3A4 (348 aa).

Residues 1–28 are Extracellular-facing; it reads MDLGNSGNDSVVTKFVLLGLTETAALQP. A glycan (N-linked (GlcNAc...) asparagine) is linked at asparagine 8. The chain crosses the membrane as a helical span at residues 29–52; the sequence is ILFVIFLLAYVTTIGGTLSILAAI. The Cytoplasmic segment spans residues 53–60; the sequence is LMETKLHS. A helical transmembrane segment spans residues 61–82; that stretch reads PMYFFLGNLSLPDVGCVSVTVP. The Extracellular portion of the chain corresponds to 83 to 103; sequence AMLSHFISNDRSIPYKACLSE. A disulfide bridge links cysteine 100 with cysteine 192. The chain crosses the membrane as a helical span at residues 104-123; the sequence is LFFFHLLAGADCFLLTIMAY. The Cytoplasmic portion of the chain corresponds to 124-143; sequence DRYLAICQSLTYSSRMSWGI. Residues 144 to 161 form a helical membrane-spanning segment; sequence QQALVGMSCVFSFTNALT. The Extracellular segment spans residues 162-199; it reads QTVALSPLNFCGPNVINHFYCDLPQPFQLSCSSVHLNG. Residues 200 to 222 form a helical membrane-spanning segment; the sequence is QLLFVAAAFMGVAPLVLITVSYA. At 223 to 239 the chain is on the cytoplasmic side; the sequence is HVAAAVLRIRSAEGRKK. Residues 240–262 traverse the membrane as a helical segment; it reads AFSTCSSHLTVVGIFYGTGVFSY. Residues 263–275 lie on the Extracellular side of the membrane; that stretch reads TRLGSVESSDKDK. Residues 276–295 traverse the membrane as a helical segment; sequence GIGILNTVISPMLNPLIYWT. At 296-348 the chain is on the cytoplasmic side; it reads SLLDVGCISHCSSDAGVSPGPPVQSSLCCLQFTALLSPPPGWGGLSPLNSHGL.

This sequence belongs to the G-protein coupled receptor 1 family.

It is found in the cell membrane. Its function is as follows. Odorant receptor. This is Putative olfactory receptor 3A4 (OR3A4P) from Homo sapiens (Human).